The chain runs to 173 residues: RNA polymerase sigma factor TcsR (173 aa).

Positions 122-169 are sigma-70 factor domain-4; sequence IKDLTQNEKNILRKIYLHGLRESEISRELNISRQAVNKTHLRALEKLK. The segment at residues 143–162 is a DNA-binding region (H-T-H motif); it reads ESEISRELNISRQAVNKTHL.

Belongs to the sigma-70 factor family.

Functionally, sigma factors are initiation factors that promote the attachment of RNA polymerase to specific initiation sites and are then released. Transcriptional regulator specifically required to activate expression of the toxin gene locus, composed of tcsL and tcdE/utxA. In Paraclostridium sordellii (Clostridium sordellii), this protein is RNA polymerase sigma factor TcsR.